Consider the following 137-residue polypeptide: Phosphoribosyl-AMP cyclohydrolase (137 aa).

Position 83 (Asp83) interacts with Mg(2+). Residue Cys84 participates in Zn(2+) binding. Mg(2+)-binding residues include Asp85 and Asp87. Zn(2+) is bound by residues Cys101 and Cys108.

Belongs to the PRA-CH family. As to quaternary structure, homodimer. Mg(2+) serves as cofactor. It depends on Zn(2+) as a cofactor.

Its subcellular location is the cytoplasm. The enzyme catalyses 1-(5-phospho-beta-D-ribosyl)-5'-AMP + H2O = 1-(5-phospho-beta-D-ribosyl)-5-[(5-phospho-beta-D-ribosylamino)methylideneamino]imidazole-4-carboxamide. It functions in the pathway amino-acid biosynthesis; L-histidine biosynthesis; L-histidine from 5-phospho-alpha-D-ribose 1-diphosphate: step 3/9. Functionally, catalyzes the hydrolysis of the adenine ring of phosphoribosyl-AMP. This is Phosphoribosyl-AMP cyclohydrolase from Burkholderia mallei (strain ATCC 23344).